A 601-amino-acid chain; its full sequence is Sulfite reductase [NADPH] flavoprotein alpha-component (601 aa).

The 139-residue stretch at 64–202 folds into the Flavodoxin-like domain; it reads ITLISASQTG…AAAEWRARIV (139 aa). FMN contacts are provided by residues 70–75, 117–120, and 153–162; these read SQTGNA, STQG, and LGDTSYEFFC. Residues 236 to 450 form the FAD-binding FR-type domain; sequence EEPLVASLSV…IEHNDNFRLP (215 aa). FAD contacts are provided by residues threonine 324, alanine 358, 388 to 391, 406 to 408, and 421 to 424; these read RLYS, TVG, and GGAS. Residues 521–522, 527–531, and aspartate 563 each bind NADP(+); these read SR and KIYVQ. Tyrosine 601 lines the FAD pocket.

The protein belongs to the NADPH-dependent sulphite reductase flavoprotein subunit CysJ family. This sequence in the N-terminal section; belongs to the flavodoxin family. In the C-terminal section; belongs to the flavoprotein pyridine nucleotide cytochrome reductase family. As to quaternary structure, alpha(8)-beta(8). The alpha component is a flavoprotein, the beta component is a hemoprotein. It depends on FAD as a cofactor. Requires FMN as cofactor.

The enzyme catalyses hydrogen sulfide + 3 NADP(+) + 3 H2O = sulfite + 3 NADPH + 4 H(+). It functions in the pathway sulfur metabolism; hydrogen sulfide biosynthesis; hydrogen sulfide from sulfite (NADPH route): step 1/1. In terms of biological role, component of the sulfite reductase complex that catalyzes the 6-electron reduction of sulfite to sulfide. This is one of several activities required for the biosynthesis of L-cysteine from sulfate. The flavoprotein component catalyzes the electron flow from NADPH -&gt; FAD -&gt; FMN to the hemoprotein component. The chain is Sulfite reductase [NADPH] flavoprotein alpha-component from Enterobacter sp. (strain 638).